A 355-amino-acid chain; its full sequence is 45 kDa calcium-binding protein (355 aa).

Residues 1-29 form the signal peptide; it reads MASRQGPLCGLAPCCLWLLGVILLMNASA. Asn-26 carries N-linked (GlcNAc...) asparagine glycosylation. EF-hand domains lie at 91–126 and 130–165; these read KSRRKLMVIFSKVDLNTDRRISAKEMQKWIMQKTAE and EAVAESRAHFRAVDPDGDGHVSWDEYKVKFLATKGH. Ser-92 carries the phosphoserine modification. Positions 104, 106, 108, 110, 115, 143, 145, 147, 149, and 154 each coordinate Ca(2+). Residues Thr-186 and Thr-210 each carry the phosphothreonine modification. EF-hand domains are found at residues 226–261, 271–306, and 307–342; these read MLQFMVKEIIRDLDQDGDKKLSLSEFISLPVGTVEN, WVRDRKREFEELIDANHDGIVTMAELEDYMDPMNEF, and SALNEAKQMIAIADENQNHYLEPEEVLKYSEFFTGS. 5 residues coordinate Ca(2+): Asp-239, Asp-241, Asp-243, Lys-245, and Glu-250. Position 258 is a phosphothreonine (Thr-258). Positions 284, 286, and 288 each coordinate Ca(2+). Thr-292 carries the post-translational modification Phosphothreonine. Glu-295, Asp-320, Asn-322, Asn-324, Tyr-326, and Glu-331 together coordinate Ca(2+). The tract at residues 302 to 355 is necessary for intracellular retention in Golgi apparatus lumen; sequence PMNEFSALNEAKQMIAIADENQNHYLEPEEVLKYSEFFTGSKLVDYARSVHEEF.

This sequence belongs to the CREC family.

It is found in the golgi apparatus lumen. May regulate calcium-dependent activities in the endoplasmic reticulum lumen or post-ER compartment. The polypeptide is 45 kDa calcium-binding protein (SDF4) (Capra hircus (Goat)).